A 551-amino-acid polypeptide reads, in one-letter code: MPTFDQALRKAGEFGRFQRRVFLLLCLTGVTFAFLFVGVVFLGSQPDYYWCRGPRATALAERCAWSPEEEWNLTTPELHVPAERRGQGHCHRYLLEDTNTSSELSCDPLAAFPNRSAPLVPCSGDWRYVETHSTIVSQFDLVCGNAWMLDLTQAILNLGFLAGAFTLGYAADRYGRLIVYLISCFGVGITGVVVAFAPNFSVFVIFRFLQGVFGKGAWMTCFVIVTEIVGSKQRRIVGIVIQMFFTLGIIILPGIAYFTPSWQGIQLAISLPSFLFLLYYWVVPESPRWLITRKQGEKALQILRRVAKCNGKHLSSNYSEITVTDEEVSNPSCLDLVRTPQMRKCTLILMFAWFTSAVVYQGLVMRLGLIGGNLYMDFFISGLVELPGALLILLTIERLGRRLPFAASNIVAGVSCLVTAFLPEGIPWLRTTVATLGRLGITMAFEIVYLVNSELYPTTLRNFGVSLCSGLCDFGGIIAPFLLFRLAAIWLELPLIIFGILASVCGGLVMLLPETKGIALPETVEDVEKLGSSQLHQCGRKKKTQVSTSNV.

A helical membrane pass occupies residues 21–41 (VFLLLCLTGVTFAFLFVGVVF). Asn72, Asn99, and Asn114 each carry an N-linked (GlcNAc...) asparagine glycan. A helical membrane pass occupies residues 177–197 (LIVYLISCFGVGITGVVVAFA). Asn199 is a glycosylation site (N-linked (GlcNAc...) asparagine). A run of 2 helical transmembrane segments spans residues 236 to 256 (IVGI…PGIA) and 264 to 284 (GIQL…WVVP). Residues 284–288 (PESPR) carry the Proline-rich sequence motif. A glycan (N-linked (GlcNAc...) asparagine) is linked at Asn317. A run of 3 helical transmembrane segments spans residues 376 to 396 (MDFF…LLTI), 463 to 483 (FGVS…PFLL), and 493 to 513 (LPLI…MLLP).

This sequence belongs to the major facilitator (TC 2.A.1) superfamily. Organic cation transporter (TC 2.A.1.19) family. As to expression, highly expressed in placenta. Expressed in intestine, hear, kidney and lung. Widely expressed in brain, particularly in hippocampus, cerebellum, cerebral cortex. In the brain, expressed predominantly in regions located at the brain-cerebrospinal fluid border, with expression extending to regions that belong to monoaminergic pathways such as raphe nuclei, striatum and thalamus. In brain, expressed in neurons and glial cells of amygdala. Expression is low in kidney and lung and undetectable in liver. Expressed in Sertoli cells in testis. Expressed in tracheal and bronchial epithelium of the respiratory tract, where it localizes to the apical membrane of ciliated and brush cells, and in basal cells.

It localises to the cell membrane. It is found in the apical cell membrane. Its subcellular location is the basolateral cell membrane. The protein resides in the mitochondrion membrane. The protein localises to the endomembrane system. It localises to the nucleus membrane. It is found in the nucleus outer membrane. It carries out the reaction (R)-noradrenaline(out) = (R)-noradrenaline(in). The enzyme catalyses (R)-adrenaline(out) = (R)-adrenaline(in). The catalysed reaction is serotonin(out) = serotonin(in). It catalyses the reaction dopamine(out) = dopamine(in). It carries out the reaction histamine(out) = histamine(in). The enzyme catalyses tyramine(in) = tyramine(out). The catalysed reaction is guanidine(out) = guanidine(in). It catalyses the reaction agmatine(out) = agmatine(in). It carries out the reaction spermidine(in) = spermidine(out). The enzyme catalyses L-histidyl-L-proline diketopiperazine(in) = L-histidyl-L-proline diketopiperazine(out). The catalysed reaction is (R)-salsolinol(in) = (R)-salsolinol(out). Functionally, electrogenic voltage-dependent transporter that mediates the transport of a variety of organic cations such as endogenous bioactive amines, cationic drugs and xenobiotics. Cation cellular uptake or release is driven by the electrochemical potential, i.e. membrane potential and concentration gradient. Functions as a Na(+)- and Cl(-)-independent, bidirectional uniporter. Implicated in neuronal monoamine neurotransmitters cellular uptake such as dopamine, adrenaline/epinephrine, noradrenaline/norepinephrine, histamine, serotonin and tyramine, thereby supporting a role in homeostatic regulation of aminergic neurotransmission in the brain. Transports dopaminergic neuromodulators cyclo(his-pro) and salsolinol with low efficiency. May be involved in the uptake and disposition of cationic compounds by renal clearance from the blood flow. May contribute to regulate the transport of cationic compounds in testis across the blood-testis-barrier. Mediates the transport of polyamine spermidine and putrescine. Mediates the bidirectional transport of polyamine agmatine. Also transports guanidine. May also mediate intracellular transport of organic cations, thereby playing a role in amine metabolism and intracellular signaling. The sequence is that of Solute carrier family 22 member 3 from Rattus norvegicus (Rat).